The following is a 216-amino-acid chain: Ribosomal RNA small subunit methyltransferase G (216 aa).

Residues Gly-73, Leu-78, 124–125, and Arg-139 contribute to the S-adenosyl-L-methionine site; that span reads AE.

It belongs to the methyltransferase superfamily. RNA methyltransferase RsmG family.

The protein localises to the cytoplasm. Specifically methylates the N7 position of guanine in position 518 of 16S rRNA. The sequence is that of Ribosomal RNA small subunit methyltransferase G from Paenarthrobacter aurescens (strain TC1).